The primary structure comprises 567 residues: Proline--tRNA ligase (567 aa).

The protein belongs to the class-II aminoacyl-tRNA synthetase family. ProS type 1 subfamily. Homodimer.

The protein localises to the cytoplasm. It catalyses the reaction tRNA(Pro) + L-proline + ATP = L-prolyl-tRNA(Pro) + AMP + diphosphate. Catalyzes the attachment of proline to tRNA(Pro) in a two-step reaction: proline is first activated by ATP to form Pro-AMP and then transferred to the acceptor end of tRNA(Pro). As ProRS can inadvertently accommodate and process non-cognate amino acids such as alanine and cysteine, to avoid such errors it has two additional distinct editing activities against alanine. One activity is designated as 'pretransfer' editing and involves the tRNA(Pro)-independent hydrolysis of activated Ala-AMP. The other activity is designated 'posttransfer' editing and involves deacylation of mischarged Ala-tRNA(Pro). The misacylated Cys-tRNA(Pro) is not edited by ProRS. The protein is Proline--tRNA ligase of Geobacillus kaustophilus (strain HTA426).